The primary structure comprises 300 residues: MSATTPLLESRLQSLPLLARGKVRDNYAVGSDRLLMVASDRLSAFDVVMGEPIPGKGELLTRMALFWFARLGHIVPNHLTGDAPESVVSAAERSQVTGRSMLVKRLKPLPVEAVVRGYLAGSGWKEYQHNGQVCGVKLPPGLKNASKLPSPIFTPATKAEMGEHDENIPFERMVEIIGAPLAEQVRRVAIALYETAAAFALGKGIIIADTKFEFGLDEAGTLTLMDEVLTPDSSRFWPVEGYAEGINPPSYDKQFVRDWLEQAVVDGRPWNKQAPAPALPADVVARTAAKYREALERLTA.

This sequence belongs to the SAICAR synthetase family.

The catalysed reaction is 5-amino-1-(5-phospho-D-ribosyl)imidazole-4-carboxylate + L-aspartate + ATP = (2S)-2-[5-amino-1-(5-phospho-beta-D-ribosyl)imidazole-4-carboxamido]succinate + ADP + phosphate + 2 H(+). It functions in the pathway purine metabolism; IMP biosynthesis via de novo pathway; 5-amino-1-(5-phospho-D-ribosyl)imidazole-4-carboxamide from 5-amino-1-(5-phospho-D-ribosyl)imidazole-4-carboxylate: step 1/2. The chain is Phosphoribosylaminoimidazole-succinocarboxamide synthase from Methylibium petroleiphilum (strain ATCC BAA-1232 / LMG 22953 / PM1).